A 229-amino-acid polypeptide reads, in one-letter code: MAKKSKQLRAALEKIDSTKAYSVEEAVALAKETNFAKFDATVEVAYNLNIDVKKADQQIRGAMVLPNGTGKTSRVLVFARGAKAEEAKAAGADFVGEDDLVAKINDGWLDFDVVIATPDMMALVGRLGRVLGPRNLMPNPKTGTVTMDVAKAVEESKGGKITYRADRAGNVQAIIGKVSFEADKLVENFKAFNDTIQKAKPATAKGTYVTNLTITTTQGVGIKVDVNSL.

The protein belongs to the universal ribosomal protein uL1 family. Part of the 50S ribosomal subunit.

Its function is as follows. Binds directly to 23S rRNA. The L1 stalk is quite mobile in the ribosome, and is involved in E site tRNA release. In terms of biological role, protein L1 is also a translational repressor protein, it controls the translation of the L11 operon by binding to its mRNA. This chain is Large ribosomal subunit protein uL1, found in Streptococcus sanguinis (strain SK36).